The chain runs to 96 residues: Frd operon uncharacterized protein C (96 aa).

This sequence belongs to the HupF/HypC family.

The polypeptide is Frd operon uncharacterized protein C (Proteus vulgaris).